The following is a 214-amino-acid chain: Protein transport protein SEC22 (214 aa).

The Cytoplasmic portion of the chain corresponds to 1–192 (MIKSTLIYRE…QKINFDLLIS (192 aa)). The Longin domain maps to 6 to 117 (LIYREDGLPL…YQFVNFDNFL (112 aa)). The v-SNARE coiled-coil homology domain maps to 132-192 (NLDQLNQELV…QKINFDLLIS (61 aa)). At Ser-160 the chain carries Phosphoserine. A helical; Anchor for type IV membrane protein transmembrane segment spans residues 193 to 213 (QYAPIVIVAFFFVFLFWWIFL). Lys-214 is a topological domain (vesicular).

Belongs to the synaptobrevin family. In terms of assembly, component of two distinct SNARE complexes consisting of SED5, BOS1, BET1 and SEC22 or UFE1, USE1, SEC20 and SEC22. YKT6 can probably replace SEC22 as subunit of either complex. Interacts with SEC24, YIF1 and YIP1.

The protein localises to the membrane. It localises to the endoplasmic reticulum membrane. The protein resides in the golgi apparatus membrane. Its function is as follows. Nonessential SNARE involved in targeting and fusion of ER-derived transport vesicles with the Golgi complex as well as Golgi-derived retrograde transport vesicles with the ER. This is Protein transport protein SEC22 (SEC22) from Saccharomyces cerevisiae (strain ATCC 204508 / S288c) (Baker's yeast).